A 445-amino-acid polypeptide reads, in one-letter code: Rab GDP dissociation inhibitor beta (445 aa).

Residue Met-1 is modified to N-acetylmethionine. Lys-57 is subject to N6-succinyllysine. Position 112 is an N6-acetyllysine (Lys-112). Ser-130 is modified (phosphoserine). Lys-269 bears the N6-acetyllysine mark. Ser-382 is subject to Phosphoserine.

The protein belongs to the Rab GDI family. In terms of assembly, interacts with RHOH. Interacts with the GDP-bound inactive forms of RAB3A, RAB3B, RAB3C, RAB5A, RAB5B, RAB5C, RAB8A, RAB8B, RAB10, RAB12, RAB35, and RAB43; binds RAB3D to a lesser extent. Interacts with DZIP1; this interaction negatively regulates the interaction of GDI2 with GDP-bound RAB8A.

The protein resides in the cytoplasm. It is found in the membrane. The protein localises to the golgi apparatus. It localises to the trans-Golgi network. Functionally, GDP-dissociation inhibitor preventing the GDP to GTP exchange of most Rab proteins. By keeping these small GTPases in their inactive GDP-bound form regulates intracellular membrane trafficking. Negatively regulates protein transport to the cilium and ciliogenesis through the inhibition of RAB8A. The protein is Rab GDP dissociation inhibitor beta (GDI2) of Canis lupus familiaris (Dog).